The sequence spans 526 residues: Light-independent protochlorophyllide reductase subunit B (526 aa).

D36 contacts [4Fe-4S] cluster. The active-site Proton donor is the D290. G425 to L426 is a binding site for substrate.

The protein belongs to the ChlB/BchB/BchZ family. In terms of assembly, protochlorophyllide reductase is composed of three subunits; ChlL, ChlN and ChlB. Forms a heterotetramer of two ChlB and two ChlN subunits. The cofactor is [4Fe-4S] cluster.

The enzyme catalyses chlorophyllide a + oxidized 2[4Fe-4S]-[ferredoxin] + 2 ADP + 2 phosphate = protochlorophyllide a + reduced 2[4Fe-4S]-[ferredoxin] + 2 ATP + 2 H2O. The protein operates within porphyrin-containing compound metabolism; chlorophyll biosynthesis (light-independent). Its function is as follows. Component of the dark-operative protochlorophyllide reductase (DPOR) that uses Mg-ATP and reduced ferredoxin to reduce ring D of protochlorophyllide (Pchlide) to form chlorophyllide a (Chlide). This reaction is light-independent. The NB-protein (ChlN-ChlB) is the catalytic component of the complex. The polypeptide is Light-independent protochlorophyllide reductase subunit B (Prochlorococcus marinus subsp. pastoris (strain CCMP1986 / NIES-2087 / MED4)).